The primary structure comprises 209 residues: Uracil phosphoribosyltransferase (209 aa).

Residues Arg79, Arg104, and 131-139 (DPMLATGVS) contribute to the 5-phospho-alpha-D-ribose 1-diphosphate site. Uracil is bound by residues Ile194 and 199 to 201 (GDA). Residue Asp200 coordinates 5-phospho-alpha-D-ribose 1-diphosphate.

This sequence belongs to the UPRTase family. Mg(2+) is required as a cofactor.

It catalyses the reaction UMP + diphosphate = 5-phospho-alpha-D-ribose 1-diphosphate + uracil. Its pathway is pyrimidine metabolism; UMP biosynthesis via salvage pathway; UMP from uracil: step 1/1. With respect to regulation, allosterically activated by GTP. Its function is as follows. Catalyzes the conversion of uracil and 5-phospho-alpha-D-ribose 1-diphosphate (PRPP) to UMP and diphosphate. This Thermotoga maritima (strain ATCC 43589 / DSM 3109 / JCM 10099 / NBRC 100826 / MSB8) protein is Uracil phosphoribosyltransferase.